The sequence spans 349 residues: Lachesin (349 aa).

A signal peptide spans 1–18 (MDLRLYTIFVGFFSVVYA). The Ig-like V-type domain occupies 22 to 127 (PTISYISQEQ…NKITAEVDLQ (106 aa)). Cysteines 43 and 110 form a disulfide. Ig-like C2-type domains are found at residues 132–218 (PVIS…IAVE) and 222–315 (PPVI…VELF). Asparagine 137 carries an N-linked (GlcNAc...) asparagine glycan. Cystine bridges form between cysteine 154–cysteine 201 and cysteine 244–cysteine 299. Glycine 332 carries GPI-anchor amidated glycine lipidation. The propeptide at 333 to 349 (DAAEISTSMALILISTI) is removed in mature form.

The N-terminus is blocked. In terms of tissue distribution, expressed by all neurogenic cells early, but only those cells that become neuroblasts continue to express it. Expressed by neuroblasts, ganglion mother cells and neurons early in their lives, but expression becomes restricted to a subset of neurons as development progresses. Expressed by sensory neurons as they delaminate from the body wall ectoderm. It is also present on growing axons of the CNS and PNS and becomes restricted to a subset of axons later in development.

It localises to the cell membrane. Functionally, may play a role in early neuronal differentiation and axon outgrowth. The sequence is that of Lachesin (LAC) from Schistocerca americana (American grasshopper).